The chain runs to 246 residues: UPF0758 protein SSU98_1084 (246 aa).

Positions 103–225 (RILGSEKLGR…YYSFREESDV (123 aa)) constitute an MPN domain. Zn(2+) contacts are provided by H174, H176, and D187. Positions 174–187 (HNHPSGSVQPSRND) match the JAMM motif motif.

It belongs to the UPF0758 family.

In Streptococcus suis (strain 98HAH33), this protein is UPF0758 protein SSU98_1084.